The sequence spans 301 residues: Ribosomal protein L11 methyltransferase (301 aa).

The S-adenosyl-L-methionine site is built by Thr-146, Gly-167, Asp-189, and Asn-237.

Belongs to the methyltransferase superfamily. PrmA family.

It is found in the cytoplasm. It carries out the reaction L-lysyl-[protein] + 3 S-adenosyl-L-methionine = N(6),N(6),N(6)-trimethyl-L-lysyl-[protein] + 3 S-adenosyl-L-homocysteine + 3 H(+). Methylates ribosomal protein L11. The chain is Ribosomal protein L11 methyltransferase from Prochlorococcus marinus (strain MIT 9313).